Here is a 210-residue protein sequence, read N- to C-terminus: FMN-dependent NADH:quinone oxidoreductase 8 (210 aa).

Residues serine 10 and 16-18 (SIS) each bind FMN.

The protein belongs to the azoreductase type 1 family. In terms of assembly, homodimer. Requires FMN as cofactor.

It catalyses the reaction 2 a quinone + NADH + H(+) = 2 a 1,4-benzosemiquinone + NAD(+). The enzyme catalyses N,N-dimethyl-1,4-phenylenediamine + anthranilate + 2 NAD(+) = 2-(4-dimethylaminophenyl)diazenylbenzoate + 2 NADH + 2 H(+). In terms of biological role, quinone reductase that provides resistance to thiol-specific stress caused by electrophilic quinones. Its function is as follows. Also exhibits azoreductase activity. Catalyzes the reductive cleavage of the azo bond in aromatic azo compounds to the corresponding amines. In Burkholderia lata (strain ATCC 17760 / DSM 23089 / LMG 22485 / NCIMB 9086 / R18194 / 383), this protein is FMN-dependent NADH:quinone oxidoreductase 8.